Here is a 159-residue protein sequence, read N- to C-terminus: S-ribosylhomocysteine lyase 1 (159 aa).

His-54, His-58, and Cys-124 together coordinate Fe cation.

It belongs to the LuxS family. In terms of assembly, homodimer. Requires Fe cation as cofactor.

It carries out the reaction S-(5-deoxy-D-ribos-5-yl)-L-homocysteine = (S)-4,5-dihydroxypentane-2,3-dione + L-homocysteine. Its function is as follows. Involved in the synthesis of autoinducer 2 (AI-2) which is secreted by bacteria and is used to communicate both the cell density and the metabolic potential of the environment. The regulation of gene expression in response to changes in cell density is called quorum sensing. Catalyzes the transformation of S-ribosylhomocysteine (RHC) to homocysteine (HC) and 4,5-dihydroxy-2,3-pentadione (DPD). This Lactobacillus delbrueckii subsp. bulgaricus (strain ATCC BAA-365 / Lb-18) protein is S-ribosylhomocysteine lyase 1.